A 201-amino-acid polypeptide reads, in one-letter code: Cerebellin-4 (201 aa).

The N-terminal stretch at 1–27 is a signal peptide; it reads MGSGRRALSAVPAVLLVLTLPGLPVWA. Residues Asn29 and Asn88 are each glycosylated (N-linked (GlcNAc...) asparagine). Residues 66 to 201 form the C1q domain; the sequence is AANSKVAFSA…TFSGFLVFPL (136 aa).

Homohexamer; disulfide-linked homotrimers. The trimers are assembled via the globular C1q domains. The trimers associate via N-terminal cysteine residues to form disulfide-linked hexamers. May form oligomers with CBLN1, CBLN2 and CBLN3 prior to secretion. Strongly interacts with DCC in a NTN1-displaceable fashion. Weakly binds to NRXN1 and NRXN2 long and short isoforms produced by alternative promoter usage. Interaction with NRXN3 short isoform is hardly detectable; no interaction at all with NRXN3 long isoform. In terms of processing, sialoglycoprotein.

The protein localises to the secreted. The protein resides in the synapse. Acts as a synaptic organizer in specific subsets of neurons in the brain. Essential for the formation and maintenance of inhibitory GABAergic synapses. Promotes the development of dendrite-targeting inhibitory GABAergic synapses made by somatostatin-positive interneurons. May contribute to the function of ventral medial habenula region of the brain implicated in the regulation of anxiety-related behaviors. May play a role in CBLN3 export from the endoplasmic reticulum and secretion. This Homo sapiens (Human) protein is Cerebellin-4 (CBLN4).